A 351-amino-acid chain; its full sequence is 2-Hydroxyacid oxidase 2 (351 aa).

The FMN hydroxy acid dehydrogenase domain occupies 2–351 (SLVCLTDFQA…NRNLVQFSRL (350 aa)). FMN-binding positions include 77–79 (PTG), S106, and Q128. Residue Y130 coordinates a 2-oxocarboxylate. T156 serves as a coordination point for FMN. An a 2-oxocarboxylate-binding site is contributed by R165. A Phosphothreonine modification is found at T178. K222 provides a ligand contact to FMN. Catalysis depends on H246, which acts as the Proton acceptor. A 2-oxocarboxylate is bound at residue R249. Residues 277–281 (DGGVR) and 300–301 (GR) each bind FMN. Positions 349–351 (SRL) match the Microbody targeting signal motif.

This sequence belongs to the FMN-dependent alpha-hydroxy acid dehydrogenase family. Homotetramer. FMN is required as a cofactor. Expressed in the liver and kidney.

It localises to the peroxisome. The catalysed reaction is a (2S)-2-hydroxycarboxylate + O2 = a 2-oxocarboxylate + H2O2. The enzyme catalyses 2-hydroxyhexadecanoate + O2 = 2-oxohexadecanoate + H2O2. It carries out the reaction 2-hydroxyoctanoate + O2 = 2-oxooctanoate + H2O2. It functions in the pathway lipid metabolism; fatty acid metabolism. Functionally, oxidase that catalyzes the oxidation of medium and long chain hydroxyacids such as 2-hydroxyhexadecanoate and 2-hydroxyoctanoate, to the correspondong 2-oxoacids. Its role in the oxidation of 2-hydroxy fatty acids may contribute to the general pathway of fatty acid alpha-oxidation. Active in vitro with the artificial electron acceptor 2,6-dichlorophenolindophenol (DCIP), but O2 is believed to be the physiological electron acceptor, leading to the production of H2O2. Is not active on glycolate, glyoxylate, L-lactate and 2-hydroxybutanoate. This Homo sapiens (Human) protein is 2-Hydroxyacid oxidase 2 (HAO2).